We begin with the raw amino-acid sequence, 234 residues long: 7-carboxy-7-deazaguanine synthase (234 aa).

Residues 36–38 (IQG) and R51 contribute to the substrate site. Residues 42 to 234 (FVGYPSIFIR…LQTHKFLGIE (193 aa)) form the Radical SAM core domain. Residues C55, C59, and C62 each coordinate [4Fe-4S] cluster. T64 serves as a coordination point for Mg(2+). T100 provides a ligand contact to substrate. Residues G102, 144 to 146 (SPK), and 195 to 198 (QSMD) each bind S-adenosyl-L-methionine.

Belongs to the radical SAM superfamily. 7-carboxy-7-deazaguanine synthase family. In terms of assembly, homodimer. [4Fe-4S] cluster serves as cofactor. It depends on S-adenosyl-L-methionine as a cofactor. Mg(2+) is required as a cofactor.

The enzyme catalyses 6-carboxy-5,6,7,8-tetrahydropterin + H(+) = 7-carboxy-7-deazaguanine + NH4(+). It participates in purine metabolism; 7-cyano-7-deazaguanine biosynthesis. In terms of biological role, catalyzes the complex heterocyclic radical-mediated conversion of 6-carboxy-5,6,7,8-tetrahydropterin (CPH4) to 7-carboxy-7-deazaguanine (CDG), a step common to the biosynthetic pathways of all 7-deazapurine-containing compounds. This Rickettsia prowazekii (strain Madrid E) protein is 7-carboxy-7-deazaguanine synthase.